We begin with the raw amino-acid sequence, 266 residues long: uncharacterized protein (266 aa).

In terms of domain architecture, TIR spans leucine 112 to phenylalanine 261. The active site involves glutamate 192.

The catalysed reaction is NAD(+) + H2O = ADP-D-ribose + nicotinamide + H(+). This is an uncharacterized protein from Bacillus subtilis (strain 168).